The following is a 360-amino-acid chain: (+)-6a-hydroxymaackiain 3-O-methyltransferase 2 (360 aa).

S-adenosyl-L-methionine contacts are provided by residues 202–205, Asp226, 226–227, 246–247, and Lys260; these read VAGG, DQ, and DM. The Proton acceptor role is filled by His264.

This sequence belongs to the class I-like SAM-binding methyltransferase superfamily. Cation-independent O-methyltransferase family. COMT subfamily.

The catalysed reaction is (+)-6a-hydroxymaackiain + S-adenosyl-L-methionine = (+)-pisatin + S-adenosyl-L-homocysteine + H(+). Its function is as follows. 3-O-methyltransferase involved in the phytoalexin pisatin biosynthesis. Can use (+)-6a-hydroxymaackiain, (+)-maackiain and with a lower activity (+)-medicarpin and 2,7,4'-trihydroxyisoflavanone as substrates, but not (-)-6a-hydroxymaackiain, daidzein, formononetin or isoliquiritigenin. This is (+)-6a-hydroxymaackiain 3-O-methyltransferase 2 (HMM2) from Pisum sativum (Garden pea).